Consider the following 359-residue polypeptide: tRNA-specific 2-thiouridylase MnmA (359 aa).

ATP is bound by residues 7–14 (AMSGGVDS) and methionine 33. The active-site Nucleophile is cysteine 101. Cysteines 101 and 198 form a disulfide. Glycine 125 contacts ATP. An interaction with tRNA region spans residues 148 to 150 (KDQ). Residue cysteine 198 is the Cysteine persulfide intermediate of the active site.

This sequence belongs to the MnmA/TRMU family.

Its subcellular location is the cytoplasm. The catalysed reaction is S-sulfanyl-L-cysteinyl-[protein] + uridine(34) in tRNA + AH2 + ATP = 2-thiouridine(34) in tRNA + L-cysteinyl-[protein] + A + AMP + diphosphate + H(+). Functionally, catalyzes the 2-thiolation of uridine at the wobble position (U34) of tRNA, leading to the formation of s(2)U34. This is tRNA-specific 2-thiouridylase MnmA from Chloroflexus aurantiacus (strain ATCC 29366 / DSM 635 / J-10-fl).